The chain runs to 98 residues: Citrate lyase acyl carrier protein (98 aa).

At S14 the chain carries O-(phosphoribosyl dephospho-coenzyme A)serine.

Belongs to the CitD family. In terms of assembly, oligomer with a subunit composition of (alpha,beta,gamma)6.

The protein resides in the cytoplasm. Functionally, covalent carrier of the coenzyme of citrate lyase. The chain is Citrate lyase acyl carrier protein from Albidiferax ferrireducens (strain ATCC BAA-621 / DSM 15236 / T118) (Rhodoferax ferrireducens).